We begin with the raw amino-acid sequence, 158 residues long: Transcriptional repressor NrdR (158 aa).

Residues 3–34 fold into a zinc finger; that stretch reads CPSCQNTDSRVLESRAADAGRSVRRRRECLHC. The ATP-cone domain occupies 49-139; that stretch reads ITVLKRNGNR…VYRDFRGVND (91 aa).

This sequence belongs to the NrdR family. It depends on Zn(2+) as a cofactor.

Functionally, negatively regulates transcription of bacterial ribonucleotide reductase nrd genes and operons by binding to NrdR-boxes. This chain is Transcriptional repressor NrdR, found in Prochlorococcus marinus (strain MIT 9313).